A 485-amino-acid chain; its full sequence is Glycogen synthase (485 aa).

K15 provides a ligand contact to ADP-alpha-D-glucose.

The protein belongs to the glycosyltransferase 1 family. Bacterial/plant glycogen synthase subfamily.

It carries out the reaction [(1-&gt;4)-alpha-D-glucosyl](n) + ADP-alpha-D-glucose = [(1-&gt;4)-alpha-D-glucosyl](n+1) + ADP + H(+). The protein operates within glycan biosynthesis; glycogen biosynthesis. Synthesizes alpha-1,4-glucan chains using ADP-glucose. The chain is Glycogen synthase from Thermosipho africanus (strain TCF52B).